The chain runs to 85 residues: Large ribosomal subunit protein bL27 (85 aa).

The disordered stretch occupies residues 1-24 (MAHKKAGGSSRNGRDSNSKRLGVK).

It belongs to the bacterial ribosomal protein bL27 family.

The protein is Large ribosomal subunit protein bL27 of Nitrosospira multiformis (strain ATCC 25196 / NCIMB 11849 / C 71).